Reading from the N-terminus, the 394-residue chain is Glutamyl-tRNA reductase (394 aa).

Residues 45 to 48 (TCNR), S99, 104 to 106 (EEQ), and Q110 contribute to the substrate site. Catalysis depends on C46, which acts as the Nucleophile. 175–180 (GLGNIG) lines the NADP(+) pocket.

It belongs to the glutamyl-tRNA reductase family. As to quaternary structure, homodimer.

The enzyme catalyses (S)-4-amino-5-oxopentanoate + tRNA(Glu) + NADP(+) = L-glutamyl-tRNA(Glu) + NADPH + H(+). It functions in the pathway porphyrin-containing compound metabolism; protoporphyrin-IX biosynthesis; 5-aminolevulinate from L-glutamyl-tRNA(Glu): step 1/2. Its function is as follows. Catalyzes the NADPH-dependent reduction of glutamyl-tRNA(Glu) to glutamate 1-semialdehyde (GSA). This is Glutamyl-tRNA reductase from Caldicellulosiruptor saccharolyticus (strain ATCC 43494 / DSM 8903 / Tp8T 6331).